We begin with the raw amino-acid sequence, 337 residues long: Large ribosomal subunit protein uL3 (337 aa).

The segment at 1–32 is disordered; it reads MAKGHRPRRGSLAYSPRKRSQSHIPRFRSWPE.

This sequence belongs to the universal ribosomal protein uL3 family. As to quaternary structure, part of the 50S ribosomal subunit. Forms a cluster with proteins L14 and L24e.

Functionally, one of the primary rRNA binding proteins, it binds directly near the 3'-end of the 23S rRNA, where it nucleates assembly of the 50S subunit. The protein is Large ribosomal subunit protein uL3 of Methanococcoides burtonii (strain DSM 6242 / NBRC 107633 / OCM 468 / ACE-M).